The following is a 465-amino-acid chain: Probable citrate synthase, mitochondrial (465 aa).

Active-site residues include histidine 303, histidine 349, and aspartate 404.

It belongs to the citrate synthase family. As to quaternary structure, homodimer.

Its subcellular location is the mitochondrion matrix. It catalyses the reaction oxaloacetate + acetyl-CoA + H2O = citrate + CoA + H(+). Its pathway is carbohydrate metabolism; tricarboxylic acid cycle; isocitrate from oxaloacetate: step 1/2. The protein is Probable citrate synthase, mitochondrial of Glossina morsitans morsitans (Savannah tsetse fly).